The primary structure comprises 112 residues: Large ribosomal subunit protein bL21 (112 aa).

It belongs to the bacterial ribosomal protein bL21 family. As to quaternary structure, part of the 50S ribosomal subunit. Contacts protein L20.

Functionally, this protein binds to 23S rRNA in the presence of protein L20. This Buchnera aphidicola subsp. Baizongia pistaciae (strain Bp) protein is Large ribosomal subunit protein bL21.